The sequence spans 291 residues: Methionine aminopeptidase (291 aa).

Residue His65 coordinates substrate. Asp85, Asp96, and His155 together coordinate a divalent metal cation. Position 163 (His163) interacts with substrate. Positions 188 and 276 each coordinate a divalent metal cation.

Belongs to the peptidase M24A family. Methionine aminopeptidase archaeal type 2 subfamily. Monomer. It depends on Co(2+) as a cofactor. Zn(2+) serves as cofactor. The cofactor is Mn(2+). Requires Fe(2+) as cofactor.

The enzyme catalyses Release of N-terminal amino acids, preferentially methionine, from peptides and arylamides.. Removes the N-terminal methionine from nascent proteins. The N-terminal methionine is often cleaved when the second residue in the primary sequence is small and uncharged (Met-Ala-, Cys, Gly, Pro, Ser, Thr, or Val). The sequence is that of Methionine aminopeptidase from Archaeoglobus fulgidus (strain ATCC 49558 / DSM 4304 / JCM 9628 / NBRC 100126 / VC-16).